A 180-amino-acid chain; its full sequence is Cytokinin-beta-glucosidase 1 (180 aa).

In terms of biological role, hydrolyzes cytokinin glucosides thus liberating free cytokinins. The chain is Cytokinin-beta-glucosidase 1 (ROLC1) from Linaria vulgaris (Toadflax).